The following is a 250-amino-acid chain: uncharacterized protein (250 aa).

This is an uncharacterized protein from Bacillus subtilis (strain 168).